A 1401-amino-acid chain; its full sequence is DNA-directed RNA polymerase subunit beta' (1401 aa).

4 residues coordinate Zn(2+): Cys-70, Cys-72, Cys-85, and Cys-88. Positions 460, 462, and 464 each coordinate Mg(2+). Residues Cys-814, Cys-888, Cys-895, and Cys-898 each coordinate Zn(2+). Positions 1369 to 1388 are disordered; the sequence is RQKQKAVEQEGPSAEQATDN.

Belongs to the RNA polymerase beta' chain family. The RNAP catalytic core consists of 2 alpha, 1 beta, 1 beta' and 1 omega subunit. When a sigma factor is associated with the core the holoenzyme is formed, which can initiate transcription. It depends on Mg(2+) as a cofactor. The cofactor is Zn(2+).

It catalyses the reaction RNA(n) + a ribonucleoside 5'-triphosphate = RNA(n+1) + diphosphate. Functionally, DNA-dependent RNA polymerase catalyzes the transcription of DNA into RNA using the four ribonucleoside triphosphates as substrates. This is DNA-directed RNA polymerase subunit beta' from Aliivibrio fischeri (strain ATCC 700601 / ES114) (Vibrio fischeri).